Reading from the N-terminus, the 374-residue chain is RNA polymerase sigma factor SigA (374 aa).

The tract at residues 141-211 is sigma-70 factor domain-2; the sequence is LAEANLRLVV…TRAIADQART (71 aa). The short motif at 165-168 is the Interaction with polymerase core subunit RpoC element; the sequence is DLIQ. Residues 220-296 are sigma-70 factor domain-3; that stretch reads ETINKLIRVQ…DQDATSPSDH (77 aa). Positions 309–362 are sigma-70 factor domain-4; it reads VLDTLTDREENVLRLRFGLDDGRTRTLEEVGRVFGVTRERIRQIEAKALRKLRH. The H-T-H motif DNA-binding region spans 335-354; that stretch reads LEEVGRVFGVTRERIRQIEA.

It belongs to the sigma-70 factor family. RpoD/SigA subfamily. In terms of assembly, interacts transiently with the RNA polymerase catalytic core.

Its subcellular location is the cytoplasm. Its function is as follows. Sigma factors are initiation factors that promote the attachment of RNA polymerase to specific initiation sites and are then released. This sigma factor is the primary sigma factor during exponential growth. This chain is RNA polymerase sigma factor SigA, found in Listeria innocua serovar 6a (strain ATCC BAA-680 / CLIP 11262).